Consider the following 617-residue polypeptide: Proline--tRNA ligase (617 aa).

Belongs to the class-II aminoacyl-tRNA synthetase family. ProS type 1 subfamily. In terms of assembly, homodimer.

It is found in the cytoplasm. It carries out the reaction tRNA(Pro) + L-proline + ATP = L-prolyl-tRNA(Pro) + AMP + diphosphate. In terms of biological role, catalyzes the attachment of proline to tRNA(Pro) in a two-step reaction: proline is first activated by ATP to form Pro-AMP and then transferred to the acceptor end of tRNA(Pro). As ProRS can inadvertently accommodate and process non-cognate amino acids such as alanine and cysteine, to avoid such errors it has two additional distinct editing activities against alanine. One activity is designated as 'pretransfer' editing and involves the tRNA(Pro)-independent hydrolysis of activated Ala-AMP. The other activity is designated 'posttransfer' editing and involves deacylation of mischarged Ala-tRNA(Pro). The misacylated Cys-tRNA(Pro) is not edited by ProRS. The polypeptide is Proline--tRNA ligase (Streptococcus pneumoniae serotype 4 (strain ATCC BAA-334 / TIGR4)).